The following is a 258-amino-acid chain: MDAWVRFSAQSQARERLCRAAQYACSLLGHALQKHGASPELQKQIRQLEGHLSLGRKLLRLGNSADALESAKRAVHLSDVVLRFCITVSHLNRALYFACDNVLWAGKSGLAPRVDQEKWAQRSFRYYLFSLIMNLSRDAYEIRLLMEQESSACSRRLKGSGGVSGGIEPGGPGGPGIPGGGLPQVALKLRLRVLLLARVLRGHPPLLLDVVRNACDLFIPLDKLGLWRCGPGIVGLCGLVSSILSILTLICPWLRLKP.

Lysine 43 is subject to N6-acetyllysine. An interaction with PEX19, PEX11G and FIS1 and peroxisome targeting region spans residues 210-258; sequence VVRNACDLFIPLDKLGLWRCGPGIVGLCGLVSSILSILTLICPWLRLKP. The chain crosses the membrane as a helical span at residues 232-254; the sequence is GIVGLCGLVSSILSILTLICPWL.

Belongs to the peroxin-11 family. In terms of assembly, homodimer. Heterodimer with PEX11G. Interacts with PEX19. Interacts with FIS1.

It localises to the peroxisome membrane. In terms of biological role, involved in peroxisomal proliferation. May regulate peroxisome division by recruiting the dynamin-related GTPase DNM1L to the peroxisomal membrane. Promotes membrane protrusion and elongation on the peroxisomal surface. In Bos taurus (Bovine), this protein is Peroxisomal membrane protein 11B (PEX11B).